We begin with the raw amino-acid sequence, 433 residues long: Alpha-(1-&gt;3)-arabinofuranosyltransferase (433 aa).

Transmembrane regions (helical) follow at residues 118–138 (LFIS…LRMF), 140–160 (FTLT…TETV), 164–184 (LVFT…LRWL), 197–217 (LAIG…LLPL), 224–244 (ALVA…PLVS), 280–300 (WLIL…LWLL), 310–330 (LFWF…VMSL), 333–353 (GYYS…NSVI), 356–376 (WPAW…LFNW), and 385–405 (YLKI…VLYF).

Belongs to the glycosyltransferase 87 family.

Its subcellular location is the cell membrane. It catalyses the reaction Adds an alpha-D-arabinofuranosyl group from trans,octacis-decaprenylphospho-beta-D-arabinofuranose at the 3-O-position of an alpha-(1-&gt;5)-arabinofuranan chain attached to a beta-(1-&gt;5)-galactofuranan chain.. Its pathway is cell wall biogenesis; cell wall polysaccharide biosynthesis. In terms of biological role, involved in the biosynthesis of the arabinogalactan (AG) region of the mycolylarabinogalactan-peptidoglycan (mAGP) complex, an essential component of the mycobacterial cell wall. Catalyzes the addition of an arabinofuranosyl (Araf) residue from the sugar donor beta-D-arabinofuranosyl-1-monophosphoryldecaprenol (DPA) on the C-3 of an alpha-(1-&gt;5)-linked Araf from the arabinan backbone of AG. The sequence is that of Alpha-(1-&gt;3)-arabinofuranosyltransferase (aftC) from Mycobacterium tuberculosis (strain CDC 1551 / Oshkosh).